Here is a 359-residue protein sequence, read N- to C-terminus: Peptide chain release factor 1 (359 aa).

Residue Gln-236 is modified to N5-methylglutamine.

This sequence belongs to the prokaryotic/mitochondrial release factor family. Post-translationally, methylated by PrmC. Methylation increases the termination efficiency of RF1.

Its subcellular location is the cytoplasm. Peptide chain release factor 1 directs the termination of translation in response to the peptide chain termination codons UAG and UAA. The polypeptide is Peptide chain release factor 1 (Streptococcus thermophilus (strain ATCC BAA-250 / LMG 18311)).